The primary structure comprises 423 residues: Serine--tRNA ligase (423 aa).

The interval 107–130 (PHDSVPDGKSENDNREIRQWGAPP) is disordered. The span at 110–124 (SVPDGKSENDNREIR) shows a compositional bias: basic and acidic residues. L-serine is bound at residue 231-233 (TGE). ATP is bound at residue 262–264 (RSE). Glutamate 285 serves as a coordination point for L-serine. 349-352 (EISS) provides a ligand contact to ATP. Serine 385 provides a ligand contact to L-serine.

It belongs to the class-II aminoacyl-tRNA synthetase family. Type-1 seryl-tRNA synthetase subfamily. In terms of assembly, homodimer. The tRNA molecule binds across the dimer.

It is found in the cytoplasm. The enzyme catalyses tRNA(Ser) + L-serine + ATP = L-seryl-tRNA(Ser) + AMP + diphosphate + H(+). It carries out the reaction tRNA(Sec) + L-serine + ATP = L-seryl-tRNA(Sec) + AMP + diphosphate + H(+). Its pathway is aminoacyl-tRNA biosynthesis; selenocysteinyl-tRNA(Sec) biosynthesis; L-seryl-tRNA(Sec) from L-serine and tRNA(Sec): step 1/1. Functionally, catalyzes the attachment of serine to tRNA(Ser). Is also able to aminoacylate tRNA(Sec) with serine, to form the misacylated tRNA L-seryl-tRNA(Sec), which will be further converted into selenocysteinyl-tRNA(Sec). This chain is Serine--tRNA ligase, found in Coxiella burnetii (strain Dugway 5J108-111).